The following is a 110-amino-acid chain: U32-theraphotoxin-Cg1a (110 aa).

The first 19 residues, 1–19 (MNHCFLILFTLIVFTVVWS), serve as a signal peptide directing secretion. A propeptide spanning residues 20-43 (LEENEEYPDEDEMIESFMDGYSYR) is cleaved from the precursor. 4 disulfide bridges follow: cysteine 49/cysteine 63, cysteine 56/cysteine 69, cysteine 60/cysteine 105, and cysteine 62/cysteine 80.

The protein belongs to the neurotoxin 03 (Tx2) family. 02 subfamily. As to expression, expressed by the venom gland.

The protein resides in the secreted. Functionally, probable ion channel inhibitor. This is U32-theraphotoxin-Cg1a from Chilobrachys guangxiensis (Chinese earth tiger tarantula).